Here is a 1893-residue protein sequence, read N- to C-terminus: CDK5 regulatory subunit-associated protein 2 (1893 aa).

Residues T51–G94 form a CM1 motif; interacts with the gTuRC region. The interval R58 to E196 is interaction with NCKAP5L. S547 is modified (phosphoserine). The tract at residues P926–E1208 is interaction with MAPRE1. T1001 carries the post-translational modification Phosphothreonine. Disordered regions lie at residues A1015–D1071 and S1084–T1105. Residues W1034–E1048 are compositionally biased toward basic and acidic residues. At S1238 the chain carries Phosphoserine. Residues L1347–E1381 are disordered. Residues T1364–E1381 are compositionally biased toward basic and acidic residues. Phosphoserine is present on S1490. Composition is skewed to basic and acidic residues over residues S1500 to N1519 and P1651 to M1661. Disordered regions lie at residues S1500–Q1521, E1646–T1706, and Q1754–A1774. Residues S1663 and S1666 each carry the phosphoserine modification. 2 stretches are compositionally biased toward polar residues: residues S1663 to T1706 and Q1754 to L1766. The tract at residues H1726–T1768 is interaction with CDK5R1. The tract at residues H1726–S1893 is interaction with PCNT and AKAP9. Residues V1861 to A1870 form a required for centrosomal attachment, Golgi localization and CALM1 interaction region. S1893 carries the post-translational modification Phosphoserine.

In terms of assembly, homodimer. Interacts with CDK5R1 (p35 form). CDK5RAP1, CDK5RAP2 and CDK5RAP3 show competitive binding to CDK5R1. May form a complex with CDK5R1 and CDK5. Interacts with pericentrin/PCNT; the interaction is leading to centrosomal and Golgi localization of CDK5RAP2 and PCNT. Interacts with AKAP9; the interaction targets CDK5RAP2 and AKAP9 to Golgi apparatus. Interacts with MAPRE1; the interaction is direct and targets CDK5RAP2 and EB1/MAPRE1 to microtubule plus ends. Interacts with TUBG1; the interaction is leading to the centrosomal localization of CDK5RAP2 and TUBG1. Interacts with TUBGCP3. Interacts with CALM1. Interacts with CDC20. Interacts with CEP68; degradation of CEP68 in early mitosis leads to removal of CDK5RAP2 from the centrosome which promotes centriole disengagement and subsequent centriole separation. Interacts with NCKAP5L. Forms a pericentrosomal complex with AKAP9, MAPRE1 and PDE4DIP isoform 13/MMG8/SMYLE; within this complex, MAPRE1 binding to CDK5RAP2 may be mediated by PDE4DIP. Interacts with LGALS3BP; this interaction may connect the pericentrosomal complex to the gamma-tubulin ring complex (gTuRC) to promote microtubule assembly and acetylation. Interacts with CCDC66. Associates (via CM1 motif) with TUBGCP2 of the gTuRC; the interaction plays a role in gTuRC activation. Phosphorylated in vitro by CDK5. Widely expressed. Expressed in heart, brain, placenta, lung, liver, skeletal muscle, kidney and pancreas.

It is found in the cytoplasm. The protein resides in the cytoskeleton. The protein localises to the microtubule organizing center. It localises to the centrosome. Its subcellular location is the golgi apparatus. In terms of biological role, potential regulator of CDK5 activity via its interaction with CDK5R1. Negative regulator of centriole disengagement (licensing) which maintains centriole engagement and cohesion. Involved in regulation of mitotic spindle orientation. Plays a role in the spindle checkpoint activation by acting as a transcriptional regulator of both BUBR1 and MAD2 promoter. Together with EB1/MAPRE1, may promote microtubule polymerization, bundle formation, growth and dynamics at the plus ends. Regulates centrosomal maturation by recruitment of the gamma-tubulin ring complex (gTuRC) onto centrosomes. In complex with PDE4DIP isoform 13/MMG8/SMYLE, MAPRE1 and AKAP9, contributes to microtubules nucleation and extension from the centrosome to the cell periphery. Required for the recruitment of AKAP9 to centrosomes. Plays a role in neurogenesis. This Homo sapiens (Human) protein is CDK5 regulatory subunit-associated protein 2 (CDK5RAP2).